The primary structure comprises 567 residues: Type II secretion system protein E (567 aa).

An ATP-binding site is contributed by 325-332 (GPTGSGKT).

The protein belongs to the GSP E family. As to quaternary structure, forms homooligomers; most probably hexamers. Interacts with XpsL/GspL.

Its subcellular location is the cell inner membrane. The catalysed reaction is ATP + H2O + cellular proteinSide 1 = ADP + phosphate + cellular proteinSide 2.. Its function is as follows. ATPase component of the type II secretion system required for the energy-dependent secretion of extracellular factors such as proteases and toxins from the periplasm. Acts as a molecular motor to provide the energy that is required for assembly of the pseudopilus and the extrusion of substrates generated in the cytoplasm. The chain is Type II secretion system protein E (xpsE) from Xanthomonas campestris pv. campestris (strain ATCC 33913 / DSM 3586 / NCPPB 528 / LMG 568 / P 25).